Reading from the N-terminus, the 337-residue chain is tRNA N6-adenosine threonylcarbamoyltransferase (337 aa).

Fe cation contacts are provided by H114 and H118. Substrate is bound by residues 136–140 (LVSGG), D169, G182, D186, and N275. D301 serves as a coordination point for Fe cation.

The protein belongs to the KAE1 / TsaD family. The cofactor is Fe(2+).

It localises to the cytoplasm. It carries out the reaction L-threonylcarbamoyladenylate + adenosine(37) in tRNA = N(6)-L-threonylcarbamoyladenosine(37) in tRNA + AMP + H(+). Required for the formation of a threonylcarbamoyl group on adenosine at position 37 (t(6)A37) in tRNAs that read codons beginning with adenine. Is involved in the transfer of the threonylcarbamoyl moiety of threonylcarbamoyl-AMP (TC-AMP) to the N6 group of A37, together with TsaE and TsaB. TsaD likely plays a direct catalytic role in this reaction. This chain is tRNA N6-adenosine threonylcarbamoyltransferase, found in Streptococcus thermophilus (strain CNRZ 1066).